A 295-amino-acid chain; its full sequence is ER-localized J domain-containing protein 5 (295 aa).

A signal peptide spans 1 to 20; it reads MNGYWKPALVVLGLVSLSYA. Residues 21 to 130 lie on the Lumenal side of the membrane; that stretch reads FTTIETEIFQ…GFYFSRMKPK (110 aa). In terms of domain architecture, J spans 42-110; sequence DMNFYKFLKL…RKIYDYYLQN (69 aa). A helical transmembrane segment spans residues 131 to 151; that stretch reads TWFLLAFIWIVVNIGQYIISI. The Cytoplasmic portion of the chain corresponds to 152 to 295; that stretch reads IQYRSQRSRI…PNGKVIYSRK (144 aa). The segment at 259 to 287 is disordered; that stretch reads KYDGNQTKKGNKVKKGSAKKGQKKMELPN. Basic residues predominate over residues 267-280; the sequence is KGNKVKKGSAKKGQ.

Belongs to the DnaJ family.

The protein localises to the endoplasmic reticulum membrane. DnaJ-like chaperone required for the folding capacity of the endoplasmic reticulum. The polypeptide is ER-localized J domain-containing protein 5 (ERJ5) (Saccharomyces cerevisiae (strain ATCC 204508 / S288c) (Baker's yeast)).